A 266-amino-acid polypeptide reads, in one-letter code: MSDILNKILDVKADEVAAAKKYRSLASLRDEVEGNKEARAAIRGFEASLRAKIAAGQAGIIAEIKKASPSKGVIRPDFHPADIAVSYEKNGAACLSVLTDVQFFQGAPEYLKQARTACALPALRKDFMIDPYQLYEARSWGADCILLIVAALDHGLMAELEACAHELGMNVLVEVHNAEELTAALKLKTSLLGVNNRNLRTFETSLQTTLDLLPRISPDKLVITESAIVTPDDVKKMRDADVHAFLVGEAFMRAPDPGVELGRLFN.

This sequence belongs to the TrpC family.

It catalyses the reaction 1-(2-carboxyphenylamino)-1-deoxy-D-ribulose 5-phosphate + H(+) = (1S,2R)-1-C-(indol-3-yl)glycerol 3-phosphate + CO2 + H2O. It functions in the pathway amino-acid biosynthesis; L-tryptophan biosynthesis; L-tryptophan from chorismate: step 4/5. The protein is Indole-3-glycerol phosphate synthase of Janthinobacterium sp. (strain Marseille) (Minibacterium massiliensis).